The sequence spans 408 residues: Arginine biosynthesis bifunctional protein ArgJ (408 aa).

Substrate is bound by residues Thr-156, Lys-182, Thr-193, Glu-279, Asn-403, and Ser-408. Catalysis depends on Thr-193, which acts as the Nucleophile.

It belongs to the ArgJ family. In terms of assembly, heterotetramer of two alpha and two beta chains.

The protein localises to the cytoplasm. The catalysed reaction is N(2)-acetyl-L-ornithine + L-glutamate = N-acetyl-L-glutamate + L-ornithine. The enzyme catalyses L-glutamate + acetyl-CoA = N-acetyl-L-glutamate + CoA + H(+). Its pathway is amino-acid biosynthesis; L-arginine biosynthesis; L-ornithine and N-acetyl-L-glutamate from L-glutamate and N(2)-acetyl-L-ornithine (cyclic): step 1/1. It functions in the pathway amino-acid biosynthesis; L-arginine biosynthesis; N(2)-acetyl-L-ornithine from L-glutamate: step 1/4. Functionally, catalyzes two activities which are involved in the cyclic version of arginine biosynthesis: the synthesis of N-acetylglutamate from glutamate and acetyl-CoA as the acetyl donor, and of ornithine by transacetylation between N(2)-acetylornithine and glutamate. This Bordetella pertussis (strain Tohama I / ATCC BAA-589 / NCTC 13251) protein is Arginine biosynthesis bifunctional protein ArgJ.